The following is a 407-amino-acid chain: MSAKVNKVVLAYSGGLDTSIIVPWLKQNYGNPEVICYCANIGQDDELSGLEEKAIATGASKCYVEDLREEFVRDFLFPLLQSGAVYERTYLLGTSVARPLIARRQAEIALQEGADALAHGCTGKGNDQVRFELTYMAFAPHLKVIAPWREWNIRSREDALDYAAEHNVPVTATLKSIYSRDRNIWHMSHEGGILEDPWNEPEEAMYTLTTDPEAAPDEPEYVVIGFEQGTPVSVNGKRLGPVELLLTLNDIGAKHGIGRVDLVENRLVGMKSHGVYETPGGTILRVAHQGLEQLTLDRDTLHYKDVIAHRYAELVYYGQWYTPLREALDAFVRVTQRNVTGEARLKLYKGNATLVGRRAAKSLYNPDIASFTMSDSYNQKDAEGFIKIFGLPVKVQALLEGRSRGER.

ATP is bound by residues alanine 11–serine 19 and alanine 39. Residues tyrosine 90 and serine 95 each contribute to the L-citrulline site. Residue glycine 120 coordinates ATP. L-aspartate-binding residues include threonine 122, asparagine 126, and aspartate 127. Asparagine 126 contributes to the L-citrulline binding site. L-citrulline is bound by residues arginine 130, serine 179, serine 188, glutamate 264, and tyrosine 276.

Belongs to the argininosuccinate synthase family. Type 1 subfamily. Homotetramer.

It is found in the cytoplasm. The catalysed reaction is L-citrulline + L-aspartate + ATP = 2-(N(omega)-L-arginino)succinate + AMP + diphosphate + H(+). It participates in amino-acid biosynthesis; L-arginine biosynthesis; L-arginine from L-ornithine and carbamoyl phosphate: step 2/3. In Roseiflexus sp. (strain RS-1), this protein is Argininosuccinate synthase.